Here is a 227-residue protein sequence, read N- to C-terminus: 2-C-methyl-D-erythritol 4-phosphate cytidylyltransferase (227 aa).

It belongs to the IspD/TarI cytidylyltransferase family. IspD subfamily.

It carries out the reaction 2-C-methyl-D-erythritol 4-phosphate + CTP + H(+) = 4-CDP-2-C-methyl-D-erythritol + diphosphate. Its pathway is isoprenoid biosynthesis; isopentenyl diphosphate biosynthesis via DXP pathway; isopentenyl diphosphate from 1-deoxy-D-xylulose 5-phosphate: step 2/6. Catalyzes the formation of 4-diphosphocytidyl-2-C-methyl-D-erythritol from CTP and 2-C-methyl-D-erythritol 4-phosphate (MEP). The chain is 2-C-methyl-D-erythritol 4-phosphate cytidylyltransferase from Deinococcus geothermalis (strain DSM 11300 / CIP 105573 / AG-3a).